Here is a 331-residue protein sequence, read N- to C-terminus: Large ribosomal subunit protein uL3 (331 aa).

The protein belongs to the universal ribosomal protein uL3 family. In terms of assembly, part of the 50S ribosomal subunit. Forms a cluster with proteins L14 and L24e.

Its function is as follows. One of the primary rRNA binding proteins, it binds directly near the 3'-end of the 23S rRNA, where it nucleates assembly of the 50S subunit. The polypeptide is Large ribosomal subunit protein uL3 (Thermoplasma acidophilum (strain ATCC 25905 / DSM 1728 / JCM 9062 / NBRC 15155 / AMRC-C165)).